A 770-amino-acid chain; its full sequence is Multifunctional tryptophan biosynthesis protein (770 aa).

The region spanning 25 to 225 (NVILIDNYDS…LKLTAGTWEG (201 aa)) is the Glutamine amidotransferase type-1 domain. 76-78 (GPG) contributes to the L-glutamine binding site. Cys-104 acts as the Nucleophile; for GATase activity in catalysis. L-glutamine contacts are provided by residues Gln-108 and 154 to 155 (SL). Active-site for GATase activity residues include His-199 and Glu-201. Positions 228-251 (KHFGEQSSTTKATVPSNPPPKTDK) are disordered. A compositionally biased stretch (polar residues) spans 232 to 242 (EQSSTTKATVP). The segment at 255-519 (ILERIYDHRR…DTATFIAELL (265 aa)) is indole-3-glycerol phosphate synthase. Residues 535 to 770 (LVKICGTRSE…RAFVQAVRGL (236 aa)) form an N-(5'-phosphoribosyl)anthranilate isomerase region.

It catalyses the reaction N-(5-phospho-beta-D-ribosyl)anthranilate = 1-(2-carboxyphenylamino)-1-deoxy-D-ribulose 5-phosphate. The catalysed reaction is 1-(2-carboxyphenylamino)-1-deoxy-D-ribulose 5-phosphate + H(+) = (1S,2R)-1-C-(indol-3-yl)glycerol 3-phosphate + CO2 + H2O. It carries out the reaction chorismate + L-glutamine = anthranilate + pyruvate + L-glutamate + H(+). It functions in the pathway amino-acid biosynthesis; L-tryptophan biosynthesis; L-tryptophan from chorismate: step 1/5. Its pathway is amino-acid biosynthesis; L-tryptophan biosynthesis; L-tryptophan from chorismate: step 3/5. It participates in amino-acid biosynthesis; L-tryptophan biosynthesis; L-tryptophan from chorismate: step 4/5. Its function is as follows. Trifunctional enzyme bearing the Gln amidotransferase (GATase) domain of anthranilate synthase, indole-glycerolphosphate synthase, and phosphoribosylanthranilate isomerase activities. The protein is Multifunctional tryptophan biosynthesis protein (trpC) of Aspergillus niger.